The sequence spans 202 residues: Holliday junction resolvase RecU (202 aa).

Mg(2+) contacts are provided by T85, D87, E100, and Q119.

This sequence belongs to the RecU family. Requires Mg(2+) as cofactor.

The protein resides in the cytoplasm. It catalyses the reaction Endonucleolytic cleavage at a junction such as a reciprocal single-stranded crossover between two homologous DNA duplexes (Holliday junction).. Its function is as follows. Endonuclease that resolves Holliday junction intermediates in genetic recombination. Cleaves mobile four-strand junctions by introducing symmetrical nicks in paired strands. Promotes annealing of linear ssDNA with homologous dsDNA. Required for DNA repair, homologous recombination and chromosome segregation. The sequence is that of Holliday junction resolvase RecU from Streptococcus pyogenes serotype M5 (strain Manfredo).